The chain runs to 321 residues: uncharacterized protein (321 aa).

Glycine 28–threonine 35 lines the ATP pocket.

Belongs to the archaeal ATPase family.

This is an uncharacterized protein from Pyrococcus horikoshii (strain ATCC 700860 / DSM 12428 / JCM 9974 / NBRC 100139 / OT-3).